Reading from the N-terminus, the 47-residue chain is Putative glycosylation-dependent cell adhesion molecule 1 (47 aa).

Positions 1–18 (MKFFMVLLPASLASTSLA) are cleaved as a signal peptide.

It belongs to the PP3/GlyCAM-1 family. Expressed in cells harvested from milk of lactating women. Not found in other tissues.

This is Putative glycosylation-dependent cell adhesion molecule 1 (GLYCAM1) from Homo sapiens (Human).